The chain runs to 412 residues: L-threonine:uridine-5'-aldehyde transaldolase (412 aa).

An N6-(pyridoxal phosphate)lysine modification is found at Lys229.

The protein belongs to the SHMT family. Pyridoxal 5'-phosphate is required as a cofactor.

The enzyme catalyses uridine-5'-aldehyde + L-threonine = (5'S,6'S)-C-glycyluridine + acetaldehyde. Its pathway is antibiotic biosynthesis. Transaldolase involved in the biosynthesis of the capuramycin-type nucleoside antibiotic A-503083. Catalyzes the condensation of L-threonine and uridine-5'-aldehyde to form 5'-C-glycyluridine (GlyU). Forms (5'S,6'S)-GlyU. The sequence is that of L-threonine:uridine-5'-aldehyde transaldolase from Streptomyces sp.